We begin with the raw amino-acid sequence, 636 residues long: Chaperone protein HtpG (636 aa).

Positions 1–342 (MSSETLEFQA…AHDLSLNISR (342 aa)) are a; substrate-binding. Residues 343-558 (ELLQQDRQIQ…AHDVTPTLEK (216 aa)) form a b region. Positions 559-636 (MYRAMGHEVP…ILAERLARTL (78 aa)) are c.

It belongs to the heat shock protein 90 family. Homodimer.

Its subcellular location is the cytoplasm. Functionally, molecular chaperone. Has ATPase activity. The sequence is that of Chaperone protein HtpG from Salinispora tropica (strain ATCC BAA-916 / DSM 44818 / JCM 13857 / NBRC 105044 / CNB-440).